Here is a 1096-residue protein sequence, read N- to C-terminus: MSSSGLDEIDLNSLRDPAGIFELIEVVGNGTYGQVYKGRHVKTAQLAAIKIMNINEDEEDEIKLEINMLKKHSHHRNVATYYGAFIKKLPSSTGKHDQLWLVMEFCGSGSITDLVKNTKGGSLKEEWIAYICREILRGLYHLHQSKVIHRDIKGQNVLLTDSAEVKLVDFGVSAQLDKTVGRRNTFIGTPYWMAPEVIACDESPEATYDSRSDLWSLGITALEMAEGHPPLCDMHPMRALFLIPRNPPPKLKRNKKWTKKFETFIETVLVKDYHQRPYTGALLRHPFIKEQPHEQTIRHSIKEHIDRNRRVKKDDADYEYSGSEDDEPSPNNRGPSMGIRDDSESSSMIPMDNTLRKGFQKLQESSRGFAEPGAQQLRRLPQQPAPAPFQYQQSRYVEPRRESSEVKLRAVSSRGAADGPRHSPASRPRPVSHHQRSPQQSHPAAPHLADLANYEKRRRSEREERRERERQAHHAMPIARVSASVPAPQQSRKMSEPLLITHVKPEDLDVLASELSKMGGHHNGRSREESMSPPPPAPPPREASISSITDTIDVGELDNGADAEWDDLKDIMMNGEGTLRGPNKPLPPTPTDGENTLVSDVRRNGNGNSGHGAYKGKKIPEIRPGIISLDDDDSDSDNEEGNEPLMFKPINASSSRGALPDLLPKSPQLRRQINDQTRQMSDDRADESASLFGSFYQPNGFQNSDSRSSIQHSFSNRDREKSFVGYFGGGAGAGGGTVNRPGRPQDINQVQVNVTPNSNGTPAENDAPEIRKYKKKFSGEILCAALWGVNLLIGTDSGLMLLDRSGQGKVYPLISRRRFDQMTVLEGQNILATISGRKRRIRVYYLSWLRQKILRTEGAGSANTTEKRNGWVNVGDLQGAIHFKIVRYERIKFLVVGLESSIEIYAWAPKPYHKFMSFKSFGSLSHVPLIVDLTVEDNARLKVLYGSTGGFHAIDLDSAAVYDIYTPAQSGQTTTPHCIVVLPNSNGMQLLLCYDNEGVYVNTYGRMTKNVVLQWGEMPSSVAYISTGQIMGWGNKAIEIRSVDTGHLDGVFMHKKAQKLKFLCERNDKVFFSSAKGGGSCQIYFMTLNKPGLTNW.

Residues 21-288 (FELIEVVGNG…TGALLRHPFI (268 aa)) form the Protein kinase domain. ATP is bound by residues 27–35 (VGNGTYGQV) and Lys50. Asp151 serves as the catalytic Proton acceptor. Residues 293–315 (HEQTIRHSIKEHIDRNRRVKKDD) show a composition bias toward basic and acidic residues. Disordered regions lie at residues 293-351 (HEQT…MIPM), 380-492 (LPQQ…QQSR), 517-545 (KMGG…EASI), and 574-664 (NGEG…DLLP). Positions 316–328 (ADYEYSGSEDDEP) are enriched in acidic residues. A compositionally biased stretch (low complexity) spans 380–393 (LPQQPAPAPFQYQQ). Composition is skewed to basic and acidic residues over residues 397–408 (VEPRRESSEVKL) and 453–472 (NYEK…ERQA). The segment covering 532 to 541 (SPPPPAPPPR) has biased composition (pro residues). Positions 629–642 (LDDDDSDSDNEEGN) are enriched in acidic residues. The CNH domain occupies 778-1070 (SGEILCAALW…KFLCERNDKV (293 aa)).

The protein belongs to the protein kinase superfamily. STE Ser/Thr protein kinase family. STE20 subfamily.

The catalysed reaction is L-seryl-[protein] + ATP = O-phospho-L-seryl-[protein] + ADP + H(+). It carries out the reaction L-threonyl-[protein] + ATP = O-phospho-L-threonyl-[protein] + ADP + H(+). Involved in cell migration and signal transduction. Important in several developmental processes including epidermal development, Q neuroblast migrations and muscle arm targeting. Required with ina-1/pat-3 to stabilize the commissural axons growth cone along a precise direction and are required for the cell to respond appropriately when signaling in the growth cone must change. During gonad morphogenesis, involved in distal tip cell (DTC) migration from the dorsal side of the hermaphrodite body to the midbody to allow for formation of gonad arms. The sequence is that of Serine/threonine-protein kinase mig-15 (mig-15) from Caenorhabditis elegans.